A 770-amino-acid polypeptide reads, in one-letter code: ARF GTPase-activating protein GIT1 (770 aa).

An Arf-GAP domain is found at 1–124 (MSRKGPRAEV…AFVHKLPCRD (124 aa)). Residues 1–124 (MSRKGPRAEV…AFVHKLPCRD (124 aa)) are interaction with gamma-tubulin and localization to the centrosome. The C4-type zinc-finger motif lies at 11 to 34 (CADCSAPDPGWASISRGVLVCDEC). 3 ANK repeats span residues 132–161 (DLSK…QANF), 166–195 (KGTT…DPGS), and 199–228 (NGRT…ELTD). A Phosphotyrosine modification is found at Tyr224. Residues 245 to 374 (HYIIPQMADR…QGKSLSSPTD (130 aa)) form an interaction with PCLO region. The segment at 253-424 (DRSRQKCMSQ…NRARSMDSSD (172 aa)) is interaction with PTK2/FAK1. Residues 254–376 (RSRQKCMSQS…KSLSSPTDNL (123 aa)) are interaction with ARHGEF7. A disordered region spans residues 363-425 (RQQGKSLSSP…RARSMDSSDL (63 aa)). Polar residues predominate over residues 366-383 (GKSLSSPTDNLELSARSQ). A phosphoserine mark is found at Ser368 and Ser371. Thr373 bears the Phosphothreonine mark. The interaction with NCK2 and GRIN3A stretch occupies residues 375–596 (NLELSARSQS…QEGSRHASKL (222 aa)). The interval 375-596 (NLELSARSQS…QEGSRHASKL (222 aa)) is required for localization at synapses. Residues Ser379 and Ser384 each carry the phosphoserine modification. Tyr392 is subject to Phosphotyrosine. Ser394 and Ser397 each carry phosphoserine. A compositionally biased stretch (acidic residues) spans 394-403 (SVASDEDTDQ). Thr401 bears the Phosphothreonine mark. Ser419, Ser422, and Ser426 each carry phosphoserine. The tract at residues 420-475 (MDSSDLSDGAVTLQEYLELKKALATSEAKVQQLMKVNSSLSDELRRLQREIHKLQA) is interaction with MAPK1. An interaction with IKBKG region spans residues 429–629 (AVTLQEYLEL…EGKRFLELSK (201 aa)). Positions 449 to 483 (VQQLMKVNSSLSDELRRLQREIHKLQAENLQLRQP) form a coiled coil. A phosphoserine mark is found at Ser507 and Ser545. Thr546 bears the Phosphothreonine mark. Residues Tyr554 and Tyr563 each carry the phosphotyrosine modification. Phosphoserine is present on residues Ser570, Ser580, Ser601, and Ser605. Residues 578–588 (PSSPLLSCSQE) are compositionally biased toward polar residues. Residues 578 to 615 (PSSPLLSCSQEGSRHASKLSRHGSGADSDYENTQSGDP) are disordered. Thr610 carries the post-translational modification Phosphothreonine. Phosphoserine is present on Ser639. The interaction with PXN and TGFB1I1 stretch occupies residues 646 to 770 (PGLPSTEDVI…VTITTREKKQ (125 aa)).

In terms of assembly, forms homodimers and possibly oligomers. May forms heterooligomers with GIT2. Interacts with G protein-coupled receptor kinases, including GRK2, GRK3, GRK5 and GRK6. Interacts with PPFIA1, PPFIA2 and PPFIA4. Interacts with GRIP1 and forms a ternary complex with PPFIA1 and GRIP1. Directly interacts with ARHGEF7/beta-PIX, forming in vitro a heptameric complex made of a GIT1 dimer and an ARHGEF7 trimer. Directly interacts with PXN/paxillin; this interaction is enhanced in the presence of ARHGEF7. Directly interacts (via C-terminus) with TGFB1I1/Hic-5 (via LD motif 3). Directly interacts with PTK2/FAK1. May interact with PTK2B/PYK2; this interaction may be indirect. Interacts with AMPA receptors GRIA2/3. Directly interacts with protein Piccolo/PCLO. Forms a complex with Ephrin-B1/EFNB1 and NCK2/GRB4 (via SH2); this interaction is important for spine morphogenesis and synapse formation. Interaction with NCK2 is transient and depends upon GIT1 phosphorylation at Tyr-392. Interacts with GRIN3A/GluN3A (via C-terminus); this interaction competes with GIT1 interaction with ARHGEF7 and limits synaptic localization of GIT1. Interacts with IKBKG/NEMO in resting bone mesenchymal stem cells, as well as in TNF-stimulated cells; this interaction may increase IKBKG affinity for 'Lys-63'-linked polyubiquitin chains. Interacts with GABA(A) receptors, including GABRB3 and GABRG2. Interacts with SCRIB. Interacts (via N- and C-terminus) with ENTR1/SDCCAG3 (via N-terminus); this interaction is direct. May form a tripartite complex with ENTR1 and PTPN13. Interacts with YWHAZ. Interacts with PAK1. Interacts with PAK3. Directly interacts (via N-terminus) with gamma-tubulin. Interacts with MAPK1 and MAPK3; this interaction is required for MAPK1/3 recruitment to focal adhesions. In terms of processing, phosphorylated on tyrosine residues by PTK2/FAK1 and SRC in growing fibroblasts. Phosphorylation at Tyr-392 is induced by activation of Ephrin-B1/EFNB1 and catalyzed by SRC family kinases. It is required for the interaction with NCK2 and for GIT1 recruitment to synapses in hippocampal neurons. Expressed in the brain (at protein level). Also expressed at high levels in lung and heart. In lung, expressed in endothelial cells, especially in capillaries; also expressed in smooth muscle and epithelial cells of bronchi (at protein level). Expressed in bone marrow mesenchymal stem cells, as well as in osteoclasts and bone marrow-derived macrophages (at protein level).

It is found in the cytoplasm. It localises to the presynapse. The protein resides in the postsynapse. Its subcellular location is the postsynaptic density. The protein localises to the cell junction. It is found in the focal adhesion. It localises to the cell projection. The protein resides in the lamellipodium. Its subcellular location is the cytoskeleton. The protein localises to the microtubule organizing center. It is found in the centrosome. It localises to the spindle pole. In terms of biological role, GTPase-activating protein for ADP ribosylation factor family members, including ARF1. Multidomain scaffold protein that interacts with numerous proteins and therefore participates in many cellular functions, including receptor internalization, focal adhesion remodeling, and signaling by both G protein-coupled receptors and tyrosine kinase receptors. Through PAK1 activation, positively regulates microtubule nucleation during interphase. Plays a role in the regulation of cytokinesis; for this function, may act in a pathway also involving ENTR1 and PTPN13. May promote cell motility both by regulating focal complex dynamics and by the activation of RAC1. May act as scaffold for MAPK1/3 signal transduction, recruiting MAPK1/3 to focal adhesions after EGF stimulation via a Src-dependent pathway, hence stimulating cell migration. Plays a role in brain development and function. Involved in the regulation of spine density and synaptic plasticity that is required for processes involved in learning. Plays an important role in dendritic spine morphogenesis and synapse formation. In hippocampal neurons, recruits guanine nucleotide exchange factors (GEFs), such as ARHGEF7/beta-PIX, to the synaptic membrane. These in turn locally activate RAC1, which is an essential step for spine morphogenesis and synapse formation. May contribute to the organization of presynaptic active zones through oligomerization and formation of a Piccolo/PCLO-based protein network, which includes ARHGEF7/beta-PIX and FAK1. In neurons, through its interaction with liprin-alpha family members, may be required for AMPA receptor (GRIA2/3) proper targeting to the cell membrane. In complex with GABA(A) receptors and ARHGEF7, plays a crucial role in regulating GABA(A) receptor synaptic stability, maintaining GPHN/gephyrin scaffolds and hence GABAergic inhibitory synaptic transmission, by locally coordinating RAC1 and PAK1 downstream effector activity, leading to F-actin stabilization. May also be important for RAC1 downstream signaling pathway through PAK3 and regulation of neuronal inhibitory transmission at presynaptic input. Required for successful bone regeneration during fracture healing. The function in intramembranous ossification may, at least partly, exerted by macrophages in which GIT1 is a key negative regulator of redox homeostasis, IL1B production, and glycolysis, acting through the ERK1/2/NRF2/NFE2L2 axis. May play a role in angiogenesis during fracture healing. In this process, may regulate activation of the canonical NF-kappa-B signal in bone mesenchymal stem cells by enhancing the interaction between NEMO and 'Lys-63'-ubiquitinated RIPK1/RIP1, eventually leading to enhanced production of VEGFA and others angiogenic factors. Essential for VEGF signaling through the activation of phospholipase C-gamma and ERK1/2, hence may control endothelial cell proliferation and angiogenesis. The protein is ARF GTPase-activating protein GIT1 (Git1) of Mus musculus (Mouse).